A 360-amino-acid polypeptide reads, in one-letter code: Peptide chain release factor 1 (360 aa).

At Gln-237 the chain carries N5-methylglutamine.

The protein belongs to the prokaryotic/mitochondrial release factor family. In terms of processing, methylated by PrmC. Methylation increases the termination efficiency of RF1.

The protein resides in the cytoplasm. Functionally, peptide chain release factor 1 directs the termination of translation in response to the peptide chain termination codons UAG and UAA. The protein is Peptide chain release factor 1 of Pseudomonas syringae pv. syringae (strain B728a).